Here is a 93-residue protein sequence, read N- to C-terminus: Guanine nucleotide-binding protein subunit gamma 1 (93 aa).

A coiled-coil region spans residues 12 to 52; that stretch reads TRGRHRIQAELKKLEQEARFLEEELEELDKTDKVSAALQEL. Positions 20–93 constitute a G protein gamma domain; the sequence is AELKKLEQEA…DLRRCKCWFL (74 aa). A lipid anchor (S-palmitoyl cysteine) is attached at Cys-88. Position 90 is a cysteine methyl ester (Cys-90). Cys-90 carries the S-farnesyl cysteine lipid modification. A propeptide spans 91–93 (removed in mature form); sequence WFL.

G proteins are composed of 3 units, alpha, beta and gamma. Interacts with the beta subunit RGB1.

The protein resides in the cell membrane. Functionally, guanine nucleotide-binding proteins (G proteins) are involved as modulators or transducers in various transmembrane signaling systems. The protein is Guanine nucleotide-binding protein subunit gamma 1 of Oryza sativa subsp. indica (Rice).